A 605-amino-acid chain; its full sequence is MMRARFPLLLLGLVFLASVSVSFGIAYWEKENPKHNKCLQSCNSERDSYRNQACHARCNLLKVEKEECEEGEIPRPRPRPQHPEREPQQPGEKEEDEDEQPRPIPFPRPQPRQEEEHEQREEQEWPRKEEKRGEKGSEEEDEDEDEEQDERQFPFPRPPHQKEERKQEEDEDEEQQRESEESEDSELRRHKNKNPFLFGSNRFETLFKNQYGRIRVLQRFNQRSPQLQNLRDYRILEFNSKPNTLLLPNHADADYLIVILNGTAILSLVNNDDRDSYRLQSGDALRVPSGTTYYVVNPDNNENLRLITLAIPVNKPGRFESFFLSSTEAQQSYLQGFSRNILEASYDTKFEEINKVLFSREEGQQQGEQRLQESVIVEISKEQIRALSKRAKSSSRKTISSEDKPFNLRSRDPIYSNKLGKFFEITPEKNPQLRDLDIFLSIVDMNEGALLLPHFNSKAIVILVINEGDANIELVGLKEQQQEQQQEEQPLEVRKYRAELSEQDIFVIPAGYPVVVNATSNLNFFAIGINAENNQRNFLAGSQDNVISQIPSQVQELAFPGSAQAVEKLLKNQRESYFVDAQPKKKEEGNKGRKGPLSSILRAFY.

The first 22 residues, 1-22 (MMRARFPLLLLGLVFLASVSVS), serve as a signal peptide directing secretion. A propeptide spanning residues 23 to 62 (FGIAYWEKENPKHNKCLQSCNSERDSYRNQACHARCNLLK) is cleaved from the precursor. The disordered stretch occupies residues 65–195 (KEECEEGEIP…ELRRHKNKNP (131 aa)). Residues 111–136 (PRQEEEHEQREEQEWPRKEEKRGEKG) show a composition bias toward basic and acidic residues. 2 stretches are compositionally biased toward acidic residues: residues 137 to 149 (SEEE…EEQD) and 169 to 184 (EDED…ESED). 2 Cupin type-1 domains span residues 196–354 (FLFG…EEIN) and 406–567 (FNLR…QAVE). N-linked (GlcNAc...) asparagine glycosylation is found at N261 and N517.

It belongs to the 7S seed storage protein family. The alpha-, alpha'-, and beta-subunits associate in various combinations to form trimeric proteins.

It localises to the vacuole. The protein resides in the aleurone grain. The protein localises to the endoplasmic reticulum. It is found in the protein storage vacuole. Its function is as follows. Seed storage protein. Accumulates during seed development and is hydrolyzed after germination to provide a carbon and nitrogen source for the developing seedling. This Glycine max (Soybean) protein is Beta-conglycinin alpha subunit 1.